A 680-amino-acid polypeptide reads, in one-letter code: Multisubstrate pseudouridine synthase 7 (680 aa).

Composition is skewed to basic and acidic residues over residues 1-30 (MSQE…RNGL) and 99-116 (ILSK…KDSS). 3 disordered regions span residues 1–42 (MSQE…DLSG), 99–136 (ILSK…EPAT), and 206–229 (TKGN…RRDP). Residues 206–216 (TKGNGTFTVSK) show a composition bias toward polar residues. Residue Asp277 is the Nucleophile of the active site. A TRUD domain is found at 358 to 596 (GFINYFGLQR…PGDYRKLLVR (239 aa)).

Belongs to the pseudouridine synthase TruD family.

The protein resides in the nucleus. It is found in the cytoplasm. The enzyme catalyses uridine in 5S rRNA = pseudouridine in 5S rRNA. The catalysed reaction is uridine in snRNA = pseudouridine in snRNA. It carries out the reaction uridine(13) in tRNA = pseudouridine(13) in tRNA. It catalyses the reaction a uridine in mRNA = a pseudouridine in mRNA. Its function is as follows. Catalyzes pseudouridylation at position 35 in U2 snRNA stem-loop II region which induces particular conformation of the mRNA-U2 snRNA duplex and places the nucleophile in an accessible position for the first step of splicing. Also catalyzes pseudouridylation at position 56 in U2 snRNA. Also catalyzes pseudouridylation at position 50 in 5S rRNA, position 13 in cytoplasmic tRNAs, and position 35 in pre-tRNA(Tyr). Pseudouridine residues in tRNAs may stabilize the local RNA conformation, favor interactions with protein partners and play an important role in the stabilization of the codon-anticodon interaction with mRNA. Also catalyzes pseudouridylation of mRNAs in response to heat shock: mediates pseudouridylation of mRNAs with the consensus sequence 5'-UGUAR-3'. The polypeptide is Multisubstrate pseudouridine synthase 7 (pus7) (Schizosaccharomyces pombe (strain 972 / ATCC 24843) (Fission yeast)).